The chain runs to 414 residues: Imidazolonepropionase (414 aa).

Residues His-77 and His-79 each contribute to the Fe(3+) site. Residues His-77 and His-79 each coordinate Zn(2+). Positions 86, 149, and 184 each coordinate 4-imidazolone-5-propanoate. Tyr-149 is an N-formimidoyl-L-glutamate binding site. Residue His-249 participates in Fe(3+) binding. Residue His-249 coordinates Zn(2+). Glu-252 provides a ligand contact to 4-imidazolone-5-propanoate. Asp-323 serves as a coordination point for Fe(3+). Zn(2+) is bound at residue Asp-323. Residues Asn-325 and Gly-327 each coordinate N-formimidoyl-L-glutamate. Residue Ser-328 coordinates 4-imidazolone-5-propanoate.

This sequence belongs to the metallo-dependent hydrolases superfamily. HutI family. Requires Zn(2+) as cofactor. Fe(3+) is required as a cofactor.

The protein localises to the cytoplasm. It carries out the reaction 4-imidazolone-5-propanoate + H2O = N-formimidoyl-L-glutamate. It participates in amino-acid degradation; L-histidine degradation into L-glutamate; N-formimidoyl-L-glutamate from L-histidine: step 3/3. Catalyzes the hydrolytic cleavage of the carbon-nitrogen bond in imidazolone-5-propanoate to yield N-formimidoyl-L-glutamate. It is the third step in the universal histidine degradation pathway. In Phocaeicola vulgatus (strain ATCC 8482 / DSM 1447 / JCM 5826 / CCUG 4940 / NBRC 14291 / NCTC 11154) (Bacteroides vulgatus), this protein is Imidazolonepropionase.